A 415-amino-acid chain; its full sequence is Multidrug resistance protein MdtA (415 aa).

A signal peptide spans 1–21 (MKSTVKKRGWVIAGIVVVALA). Residues 387–415 (AQTAADAAKPERGERAPTDSARAAKGARS) are disordered. Residues 394–403 (AKPERGERAP) are compositionally biased toward basic and acidic residues.

Belongs to the membrane fusion protein (MFP) (TC 8.A.1) family. As to quaternary structure, part of a tripartite efflux system composed of MdtA, MdtB and MdtC.

The protein localises to the cell inner membrane. This Cronobacter turicensis (strain DSM 18703 / CCUG 55852 / LMG 23827 / z3032) protein is Multidrug resistance protein MdtA.